Reading from the N-terminus, the 572-residue chain is Phosphoenolpyruvate-protein phosphotransferase (572 aa).

His190 acts as the Tele-phosphohistidine intermediate in catalysis. Phosphoenolpyruvate is bound by residues Arg297 and Arg333. Residues Glu432 and Asp456 each coordinate Mg(2+). Residues 455 to 456 (ND) and Arg466 contribute to the phosphoenolpyruvate site. Cys503 serves as the catalytic Proton donor.

It belongs to the PEP-utilizing enzyme family. As to quaternary structure, homodimer. It depends on Mg(2+) as a cofactor.

Its subcellular location is the cytoplasm. The enzyme catalyses L-histidyl-[protein] + phosphoenolpyruvate = N(pros)-phospho-L-histidyl-[protein] + pyruvate. In terms of biological role, general (non sugar-specific) component of the phosphoenolpyruvate-dependent sugar phosphotransferase system (sugar PTS). This major carbohydrate active-transport system catalyzes the phosphorylation of incoming sugar substrates concomitantly with their translocation across the cell membrane. Enzyme I transfers the phosphoryl group from phosphoenolpyruvate (PEP) to the phosphoryl carrier protein (HPr). The protein is Phosphoenolpyruvate-protein phosphotransferase (ptsI) of Listeria monocytogenes serovar 1/2a (strain ATCC BAA-679 / EGD-e).